The sequence spans 161 residues: Nucleotide-binding protein BceJ2315_27070 (161 aa).

It belongs to the YajQ family.

In terms of biological role, nucleotide-binding protein. The polypeptide is Nucleotide-binding protein BceJ2315_27070 (Burkholderia cenocepacia (strain ATCC BAA-245 / DSM 16553 / LMG 16656 / NCTC 13227 / J2315 / CF5610) (Burkholderia cepacia (strain J2315))).